We begin with the raw amino-acid sequence, 118 residues long: UPF0134 protein MPN_287 (118 aa).

This sequence belongs to the UPF0134 family.

This chain is UPF0134 protein MPN_287, found in Mycoplasma pneumoniae (strain ATCC 29342 / M129 / Subtype 1) (Mycoplasmoides pneumoniae).